Consider the following 154-residue polypeptide: Myoglobin (154 aa).

The Globin domain occupies 2–148; sequence GLSDGEWQSV…FRNDIAAKYK (147 aa). Ser-4 carries the post-translational modification Phosphoserine. His-65 contributes to the nitrite binding site. An O2-binding site is contributed by His-65. The residue at position 68 (Thr-68) is a Phosphothreonine. Position 94 (His-94) interacts with heme b.

Belongs to the globin family. As to quaternary structure, monomeric.

Its subcellular location is the cytoplasm. It localises to the sarcoplasm. It catalyses the reaction Fe(III)-heme b-[protein] + nitric oxide + H2O = Fe(II)-heme b-[protein] + nitrite + 2 H(+). The enzyme catalyses H2O2 + AH2 = A + 2 H2O. Monomeric heme protein which primary function is to store oxygen and facilitate its diffusion within muscle tissues. Reversibly binds oxygen through a pentacoordinated heme iron and enables its timely and efficient release as needed during periods of heightened demand. Depending on the oxidative conditions of tissues and cells, and in addition to its ability to bind oxygen, it also has a nitrite reductase activity whereby it regulates the production of bioactive nitric oxide. Under stress conditions, like hypoxia and anoxia, it also protects cells against reactive oxygen species thanks to its pseudoperoxidase activity. This chain is Myoglobin (MB), found in Perodicticus potto edwarsi (Potto).